The chain runs to 132 residues: Histone H2A (132 aa).

Basic residues predominate over residues 1-13 (MSAKGKTGRKKAS). Residues 1–21 (MSAKGKTGRKKASKGTSNSAK) are disordered.

It belongs to the histone H2A family. The nucleosome is a histone octamer containing two molecules each of H2A, H2B, H3 and H4 assembled in one H3-H4 heterotetramer and two H2A-H2B heterodimers. The octamer wraps approximately 147 bp of DNA.

The protein localises to the nucleus. Its subcellular location is the chromosome. In terms of biological role, core component of nucleosome. Nucleosomes wrap and compact DNA into chromatin, limiting DNA accessibility to the cellular machineries which require DNA as a template. Histones thereby play a central role in transcription regulation, DNA repair, DNA replication and chromosomal stability. DNA accessibility is regulated via a complex set of post-translational modifications of histones, also called histone code, and nucleosome remodeling. The polypeptide is Histone H2A (Plasmodium falciparum).